A 1866-amino-acid polypeptide reads, in one-letter code: RNA1 polyprotein (1866 aa).

The 172-residue stretch at 462-633 (LKGINDLEQL…KAYDAANFAS (172 aa)) folds into the SF3 helicase domain. 494-501 (GKSRTGKS) is a binding site for ATP. A helical transmembrane segment spans residues 897 to 917 (LVGSGNGPVLMGVAAGAFSAE). The residue at position 920 (Ser-920) is an O-(5'-phospho-RNA)-serine. The Peptidase C3 domain maps to 945–1150 (DAQMSLDQSS…CASLLPPLEP (206 aa)). Residues His-987, Glu-1023, and Cys-1113 each act as for picornain 3C-like protease activity in the active site. Residues 1429–1559 (NDVLCCDYSS…SVNAVVTPYF (131 aa)) form the RdRp catalytic domain.

In terms of processing, specific enzymatic cleavages by picornain 3C-like protease in vivo yield mature proteins. Picornain 3C-like protease is autocatalytically processed. Uridylylated by the polymerase and is covalently linked to the 5'-end of genomic RNA. This uridylylated form acts as a nucleotide-peptide primer for the polymerase.

It localises to the host membrane. It is found in the host cytoplasm. The protein localises to the host perinuclear region. The protein resides in the host endoplasmic reticulum. It carries out the reaction RNA(n) + a ribonucleoside 5'-triphosphate = RNA(n+1) + diphosphate. Thiol protease that cleaves the RNA1 and RNA2 polyproteins. Its function is as follows. Plays a role in RNA replication. It is covalently linked to the 5'terminus of both viral single-stranded RNA1 and RNA2 molecules. In terms of biological role, down-regulates the RNA1 polyprotein processing and enhances trans-cleavage of RNA2 polyproteins. The protease cofactor and the putative helicase seem to target the replication complexes to ER membranes. Their physical association causes the membrane rearrangement of host ER that may result in formation of the small membranous vesicles that are the site of viral RNA synthesis. Functionally, the protease cofactor and the putative helicase seem to target the replication complexes to ER membranes. Their physical association causes the membrane rearrangement of host ER that may result in formation of the small membranous vesicles that are the site of viral RNA synthesis. Replicates the viral genome. The chain is RNA1 polyprotein from Cajanus cajan (Pigeon pea).